Reading from the N-terminus, the 751-residue chain is Dendritic arbor reduction protein 1 (751 aa).

The span at 57-89 (NNNNTSSNNNHSSNSSSNNSNGSQTPNGNNNSS) shows a compositional bias: low complexity. 6 disordered regions span residues 57-167 (NNNN…PNSN), 248-275 (LMLS…ATSQ), 304-351 (TEKQ…QQHL), 374-410 (LQQQ…SSYQ), 458-578 (SATA…AATG), and 594-639 (SAIQ…AAHI). Basic residues predominate over residues 95–125 (HQHHQFHHHLHHHHSHQHHHQHHHLHQHHSH). Residues 153-167 (AQQQQLQPAGSPNSN) are compositionally biased toward polar residues. Composition is skewed to low complexity over residues 251-267 (SSSG…SSSN), 309-351 (RQQQ…QQHL), and 374-393 (LQQQ…SSSS). Over residues 400-410 (GDNSGNTSSYQ) the composition is skewed to polar residues. Low complexity-rich tracts occupy residues 458 to 513 (SATA…SSAS), 527 to 548 (DPGS…QRRT), and 594 to 610 (SAIQ…QVPQ). 3 C2H2-type zinc fingers span residues 664 to 688 (HHCD…QRIH), 694 to 718 (YTCQ…YRKH), and 724 to 746 (FKCI…MKRH).

This sequence belongs to the krueppel C2H2-type zinc-finger protein family. In terms of tissue distribution, highly enriched in the peripheral nervous system but is absent from the central nervous system. Expressed in neurons with more than one dendrite including da neurons, bd neurons and the dmd1 neuron but undetectable in neurons with single dendrites such as external sensory organ neurons and chodonotal neurons.

The protein resides in the nucleus. Its function is as follows. Transcriptional regulator which promotes dendrite growth by suppressing, either directly or indirectly, the expression of the microtubule-severing protein spas. Determines multipolar neuron morphology in postmitotic neurons by positively regulating the expression of genes involved in nuclear positioning including several dynein genes and the nuclear migration protein nudC. This chain is Dendritic arbor reduction protein 1, found in Drosophila melanogaster (Fruit fly).